We begin with the raw amino-acid sequence, 251 residues long: Triosephosphate isomerase (251 aa).

Position 9–11 (9–11) interacts with substrate; sequence NWK. Catalysis depends on H96, which acts as the Electrophile. The active-site Proton acceptor is E166. Substrate-binding positions include G172, S212, and 233–234; that span reads GG.

The protein belongs to the triosephosphate isomerase family. Homodimer.

The protein resides in the cytoplasm. The enzyme catalyses D-glyceraldehyde 3-phosphate = dihydroxyacetone phosphate. The protein operates within carbohydrate biosynthesis; gluconeogenesis. It participates in carbohydrate degradation; glycolysis; D-glyceraldehyde 3-phosphate from glycerone phosphate: step 1/1. In terms of biological role, involved in the gluconeogenesis. Catalyzes stereospecifically the conversion of dihydroxyacetone phosphate (DHAP) to D-glyceraldehyde-3-phosphate (G3P). This is Triosephosphate isomerase from Pelodictyon phaeoclathratiforme (strain DSM 5477 / BU-1).